The primary structure comprises 201 residues: Peptide deformylase (201 aa).

Residues 1-17 (MANNFSQLARKSKTNSP) are compositionally biased toward polar residues. The disordered stretch occupies residues 1 to 24 (MANNFSQLARKSKTNSPIEKVSKE). The Fe cation site is built by C121 and H163. Residue E164 is part of the active site. H167 is a Fe cation binding site.

Belongs to the polypeptide deformylase family. It depends on Fe(2+) as a cofactor.

It catalyses the reaction N-terminal N-formyl-L-methionyl-[peptide] + H2O = N-terminal L-methionyl-[peptide] + formate. In terms of biological role, removes the formyl group from the N-terminal Met of newly synthesized proteins. Requires at least a dipeptide for an efficient rate of reaction. N-terminal L-methionine is a prerequisite for activity but the enzyme has broad specificity at other positions. In Prochlorococcus marinus subsp. pastoris (strain CCMP1986 / NIES-2087 / MED4), this protein is Peptide deformylase.